The following is a 1167-amino-acid chain: PH and Rap-GAP domain-containing protein DDB_G0271806 (1167 aa).

2 PH domains span residues 35-140 (NCVK…SSSL) and 165-257 (HVYL…SRIP). Residues 95-160 (GIDNNNCTNS…TNANTNNGLS (66 aa)) are disordered. A compositionally biased stretch (low complexity) spans 98 to 155 (NNNCTNSNSNNNNNNSDLIHLSAPSLSSSTSSTISPISSSSSLTTTTTTTTTTTNANT). Disordered regions lie at residues 335–361 (SGGG…GGSL), 376–400 (WRFS…STQV), and 645–734 (YSRS…LEPE). A compositionally biased stretch (low complexity) spans 340-351 (NNSSPSSLQSQQ). A compositionally biased stretch (polar residues) spans 648-676 (SEPNLQSCLSSSPSTRETMVPSSPSSHQL). Positions 687–732 (EQQLSSSSSSSSQQLQLQLQQQEQEQLLQEQPEAEQSQPEPQPQLE) are enriched in low complexity. In terms of domain architecture, Rap-GAP spans 950 to 1162 (LLSFEERQTT…RTRESLLNYY (213 aa)).

This is PH and Rap-GAP domain-containing protein DDB_G0271806 from Dictyostelium discoideum (Social amoeba).